The primary structure comprises 185 residues: Ribosome maturation factor RimM (185 aa).

Residues 106–185 (TGDYYWKDLI…TIEVDWDPGF (80 aa)) enclose the PRC barrel domain.

This sequence belongs to the RimM family. As to quaternary structure, binds ribosomal protein uS19.

It is found in the cytoplasm. Its function is as follows. An accessory protein needed during the final step in the assembly of 30S ribosomal subunit, possibly for assembly of the head region. Essential for efficient processing of 16S rRNA. May be needed both before and after RbfA during the maturation of 16S rRNA. It has affinity for free ribosomal 30S subunits but not for 70S ribosomes. The protein is Ribosome maturation factor RimM of Photorhabdus laumondii subsp. laumondii (strain DSM 15139 / CIP 105565 / TT01) (Photorhabdus luminescens subsp. laumondii).